The sequence spans 156 residues: MPRKGNVPKRDVLPDPIYNDKVVAKLINNIMIDGKKSIAQKICYGAFDIIREKTGKDPLEVFEQALNNVMPVLEVKPRRVGGATYQVPVEVRPERRQALALRWLVVYARERSERTMKERLAAEIIDATNNMGGAYKKKEDTHKMAEANKAFAHYRW.

Belongs to the universal ribosomal protein uS7 family. Part of the 30S ribosomal subunit. Contacts proteins S9 and S11.

Its function is as follows. One of the primary rRNA binding proteins, it binds directly to 16S rRNA where it nucleates assembly of the head domain of the 30S subunit. Is located at the subunit interface close to the decoding center, probably blocks exit of the E-site tRNA. This Acetivibrio thermocellus (strain ATCC 27405 / DSM 1237 / JCM 9322 / NBRC 103400 / NCIMB 10682 / NRRL B-4536 / VPI 7372) (Clostridium thermocellum) protein is Small ribosomal subunit protein uS7.